The primary structure comprises 601 residues: NADH-quinone oxidoreductase subunit C/D (601 aa).

Residues Met1–Gln191 form an NADH dehydrogenase I subunit C region. The interval Asp215–Arg601 is NADH dehydrogenase I subunit D.

In the N-terminal section; belongs to the complex I 30 kDa subunit family. This sequence in the C-terminal section; belongs to the complex I 49 kDa subunit family. NDH-1 is composed of 13 different subunits. Subunits NuoB, CD, E, F, and G constitute the peripheral sector of the complex.

The protein resides in the cell inner membrane. The enzyme catalyses a quinone + NADH + 5 H(+)(in) = a quinol + NAD(+) + 4 H(+)(out). Functionally, NDH-1 shuttles electrons from NADH, via FMN and iron-sulfur (Fe-S) centers, to quinones in the respiratory chain. The immediate electron acceptor for the enzyme in this species is believed to be ubiquinone. Couples the redox reaction to proton translocation (for every two electrons transferred, four hydrogen ions are translocated across the cytoplasmic membrane), and thus conserves the redox energy in a proton gradient. In Shewanella oneidensis (strain ATCC 700550 / JCM 31522 / CIP 106686 / LMG 19005 / NCIMB 14063 / MR-1), this protein is NADH-quinone oxidoreductase subunit C/D.